A 273-amino-acid chain; its full sequence is 2,3,4,5-tetrahydropyridine-2,6-dicarboxylate N-succinyltransferase (273 aa).

2 residues coordinate substrate: R104 and D141.

Belongs to the transferase hexapeptide repeat family. As to quaternary structure, homotrimer.

Its subcellular location is the cytoplasm. The catalysed reaction is (S)-2,3,4,5-tetrahydrodipicolinate + succinyl-CoA + H2O = (S)-2-succinylamino-6-oxoheptanedioate + CoA. It functions in the pathway amino-acid biosynthesis; L-lysine biosynthesis via DAP pathway; LL-2,6-diaminopimelate from (S)-tetrahydrodipicolinate (succinylase route): step 1/3. In Psychrobacter arcticus (strain DSM 17307 / VKM B-2377 / 273-4), this protein is 2,3,4,5-tetrahydropyridine-2,6-dicarboxylate N-succinyltransferase.